A 166-amino-acid chain; its full sequence is T-cell surface glycoprotein CD3 zeta chain (166 aa).

An N-terminal signal peptide occupies residues 1–21; it reads MKWTALVIVAVLQTQFPVTAA. The Extracellular portion of the chain corresponds to 22 to 30; sequence QSFGLLDPK. The helical transmembrane segment at 31–51 threads the bilayer; it reads LCYLLDGILFIYGVIVTALFL. Residues 52-166 lie on the Cytoplasmic side of the membrane; sequence RAKFSRSADA…ALHMQALPPR (115 aa). S58 is subject to Phosphoserine. ITAM domains are found at residues 61–89, 100–128, and 133–161; these read APAY…LDRR, PQRK…EIGM, and QRRR…LHMQ. Phosphotyrosine is present on residues Y64, Y72, Y83, Y111, Y123, Y144, and Y155. Positions 126–156 are disordered; it reads IGMKSDNQRRRGKGHDGVYQGLSTATKDTYD.

Belongs to the CD3Z/FCER1G family. The TCR-CD3 complex is composed of a CD3D/CD3E and a CD3G/CD3E heterodimers that preferentially associate with TCRalpha and TCRbeta, respectively, to form TCRalpha/CD3E/CD3G and TCRbeta/CD3G/CD3E trimers. In turn, the hexamer interacts with CD3Z homodimer to form the TCR-CD3 complex. Alternatively, TCRalpha and TCRbeta can be replaced by TCRgamma and TCRdelta. Interacts with SLA. Interacts with TRAT1. Interacts with DOCK2. Interacts with SLA2. Interacts with SHB. Interacts with ZAP70. Interacts (tyrosine phosphorylated) with SHC1 (via SH2 domain). Interacts with PTPRC. Interacts with CRK; this interaction regulates CD3Z phosphorylation. Interacts (on T cell side) with CD81, ICAM1 and CD9 at immunological synapses between antigen-presenting cells and T cells. Interacts with CD160. Interacts with LY6E. Interacts with LY6E. The signaling subunit of immunoglobulin gamma (IgG) Fc receptor complex. As a homodimer or a heterodimer with FCER1G, associates with the ligand binding subunit FCGR3A (via transmembrane domain); this interaction is a prerequisite for Fc receptor complex expression on the cell surface. Interacts with CD5. Post-translationally, phosphorylated on Tyr residues after T-cell receptor triggering by LCK in association with CD4/CD8.

It localises to the cell membrane. Functionally, part of the TCR-CD3 complex present on T-lymphocyte cell surface that plays an essential role in adaptive immune response. When antigen presenting cells (APCs) activate T-cell receptor (TCR), TCR-mediated signals are transmitted across the cell membrane by the CD3 chains CD3D, CD3E, CD3G and CD3Z. All CD3 chains contain immunoreceptor tyrosine-based activation motifs (ITAMs) in their cytoplasmic domain. Upon TCR engagement, these motifs become phosphorylated by Src family protein tyrosine kinases LCK and FYN, resulting in the activation of downstream signaling pathways. CD3Z ITAMs phosphorylation creates multiple docking sites for the protein kinase ZAP70 leading to ZAP70 phosphorylation and its conversion into a catalytically active enzyme. Plays an important role in intrathymic T-cell differentiation. Additionally, participates in the activity-dependent synapse formation of retinal ganglion cells (RGCs) in both the retina and dorsal lateral geniculate nucleus (dLGN). In Ovis aries (Sheep), this protein is T-cell surface glycoprotein CD3 zeta chain (CD247).